The primary structure comprises 338 residues: Glycerol-3-phosphate dehydrogenase [NAD(P)+] (338 aa).

Residues Trp-11, Arg-30, and Lys-107 each coordinate NADPH. The sn-glycerol 3-phosphate site is built by Lys-107, Gly-140, and Ser-142. NADPH is bound at residue Ala-144. Residues Lys-195, Asp-248, Ser-258, Arg-259, and Asn-260 each coordinate sn-glycerol 3-phosphate. Lys-195 serves as the catalytic Proton acceptor. NADPH is bound at residue Arg-259. NADPH contacts are provided by Val-283 and Glu-285.

It belongs to the NAD-dependent glycerol-3-phosphate dehydrogenase family.

Its subcellular location is the cytoplasm. It carries out the reaction sn-glycerol 3-phosphate + NAD(+) = dihydroxyacetone phosphate + NADH + H(+). The catalysed reaction is sn-glycerol 3-phosphate + NADP(+) = dihydroxyacetone phosphate + NADPH + H(+). The protein operates within membrane lipid metabolism; glycerophospholipid metabolism. Its function is as follows. Catalyzes the reduction of the glycolytic intermediate dihydroxyacetone phosphate (DHAP) to sn-glycerol 3-phosphate (G3P), the key precursor for phospholipid synthesis. The protein is Glycerol-3-phosphate dehydrogenase [NAD(P)+] of Ralstonia nicotianae (strain ATCC BAA-1114 / GMI1000) (Ralstonia solanacearum).